The chain runs to 291 residues: Homeobox protein knotted-1-like 7 (291 aa).

The region spanning 194 to 214 (ELKLELKQGFKSRIEDVREEI) is the ELK domain. The homeobox; TALE-type DNA-binding region spans 215 to 278 (MRKRRAGKLP…NQRKRNWHNN (64 aa)).

The protein belongs to the TALE/KNOX homeobox family. In terms of assembly, may form heterodimeric complex with the TALE/BELL proteins. Interacts with OFP1, OFP2, OFP3, OFP4 and OFP6.

The protein localises to the nucleus. Functionally, may be involved in secondary cell wall biosynthesis. The protein is Homeobox protein knotted-1-like 7 (KNAT7) of Arabidopsis thaliana (Mouse-ear cress).